A 286-amino-acid polypeptide reads, in one-letter code: 4-hydroxybenzoate octaprenyltransferase (286 aa).

7 consecutive transmembrane segments (helical) span residues 21-40, 95-115, 142-162, 167-187, 210-230, 235-255, and 266-286; these read GTLL…AGGM, ILFV…NGLV, FLGI…TGEV, WWLF…YAMV, QIIG…GWSA, LYGL…MLIF, and FLNN…DYLI.

This sequence belongs to the UbiA prenyltransferase family. Mg(2+) is required as a cofactor.

Its subcellular location is the cell inner membrane. The enzyme catalyses all-trans-octaprenyl diphosphate + 4-hydroxybenzoate = 4-hydroxy-3-(all-trans-octaprenyl)benzoate + diphosphate. It functions in the pathway cofactor biosynthesis; ubiquinone biosynthesis. Its function is as follows. Catalyzes the prenylation of para-hydroxybenzoate (PHB) with an all-trans polyprenyl group. Mediates the second step in the final reaction sequence of ubiquinone-8 (UQ-8) biosynthesis, which is the condensation of the polyisoprenoid side chain with PHB, generating the first membrane-bound Q intermediate 3-octaprenyl-4-hydroxybenzoate. In Shewanella baltica (strain OS185), this protein is 4-hydroxybenzoate octaprenyltransferase.